The sequence spans 173 residues: Crossover junction endodeoxyribonuclease RuvC (173 aa).

Active-site residues include Asp-8, Glu-67, and Asp-139. Asp-8, Glu-67, and Asp-139 together coordinate Mg(2+).

It belongs to the RuvC family. In terms of assembly, homodimer which binds Holliday junction (HJ) DNA. The HJ becomes 2-fold symmetrical on binding to RuvC with unstacked arms; it has a different conformation from HJ DNA in complex with RuvA. In the full resolvosome a probable DNA-RuvA(4)-RuvB(12)-RuvC(2) complex forms which resolves the HJ. It depends on Mg(2+) as a cofactor.

The protein resides in the cytoplasm. The catalysed reaction is Endonucleolytic cleavage at a junction such as a reciprocal single-stranded crossover between two homologous DNA duplexes (Holliday junction).. Its function is as follows. The RuvA-RuvB-RuvC complex processes Holliday junction (HJ) DNA during genetic recombination and DNA repair. Endonuclease that resolves HJ intermediates. Cleaves cruciform DNA by making single-stranded nicks across the HJ at symmetrical positions within the homologous arms, yielding a 5'-phosphate and a 3'-hydroxyl group; requires a central core of homology in the junction. The consensus cleavage sequence is 5'-(A/T)TT(C/G)-3'. Cleavage occurs on the 3'-side of the TT dinucleotide at the point of strand exchange. HJ branch migration catalyzed by RuvA-RuvB allows RuvC to scan DNA until it finds its consensus sequence, where it cleaves and resolves the cruciform DNA. The sequence is that of Crossover junction endodeoxyribonuclease RuvC from Shewanella piezotolerans (strain WP3 / JCM 13877).